Here is a 504-residue protein sequence, read N- to C-terminus: Zinc finger protein AEBP2 (504 aa).

The disordered stretch occupies residues 1-219 (MAAALADMAD…SRMDSEDSIS (219 aa)). At Ala2 the chain carries N-acetylalanine. Residues 16 to 30 (RLSPLSPGSPGPAAR) show a composition bias toward low complexity. Phosphoserine is present on residues Ser18, Ser21, and Ser24. Acidic residues predominate over residues 36–49 (PEEEEEEDDEEAEA). A compositionally biased stretch (gly residues) spans 59–69 (GGAGGGAGGGE). Over residues 86–110 (GDEDEDEEDDEDEGSSSGGAEEESS) the composition is skewed to acidic residues. Low complexity predominate over residues 129–140 (SLSPGAASSSSG). Ser131 is modified (phosphoserine). A compositionally biased stretch (basic and acidic residues) spans 142–153 (GDGKEGLEEPKG). Composition is skewed to gly residues over residues 154-168 (PRGGPGGPGSSGGGS) and 178-189 (GDEGYGTGGGGS). 3 positions are modified to phosphoserine: Ser199, Ser203, and Ser204. An interaction with RBBP4 region spans residues 202–287 (MSSDGEPLSR…IHVDGQRGGV (86 aa)). The C2H2-type 1 zinc finger occupies 254–279 (YNCCWDQCQACFNSSPDLADHIRSIH). The C2H2-type 2; degenerate zinc-finger motif lies at 293-315 (KGCKVYNTPSTSQSWLQRHMLTH). The segment at 321–345 (FKCVVGGCNASFASQGGLARHVPTH) adopts a C2H2-type 3 zinc-finger fold. Over residues 345–358 (HFSQQNSSKVSSQP) the composition is skewed to polar residues. Residues 345-387 (HFSQQNSSKVSSQPKAKEESPSKAGMNKRRKLKNKRRRSLPRP) are disordered. Basic residues predominate over residues 370 to 385 (MNKRRKLKNKRRRSLP). Ser383 is modified (phosphoserine). Residues 400-471 (RHRAICFNLS…QLKTKVVHLS (72 aa)) are interaction with SUZ12. The important for nucleosome binding activity of the PRC2 complex stretch occupies residues 488–504 (TMPQKRLKRFDILNFPR).

It belongs to the AEBP2/jing C2H2-type zinc-finger family. In terms of assembly, self-associates. Associates with the PRC2 complex, which consists of the core components EED, EZH1 or EZH2, SUZ12, and RBBP4, and various combinations of accessory subunits including AEBP2, JARID2, PHF19, MTF2 and EPOP. Found in a monomeric PRC2.2 (class 2) complex consisting of at least SUZ12, RBBP4, AEBP2 and JARID2. Within the PRC2 complex, interacts directly with SUZ12; competes with PHF19 for SUZ12 binding. Interacts with EED, EZH2, and RBBP4. May also interact with RBBP7. Expressed in brain, brown adipose tissue, white adipose tissue, heart, kidney, lung, skeletal muscle, small intestine and spleen. Expressed at low levels in liver.

The protein resides in the nucleus. Its function is as follows. Acts as an accessory subunit for the core Polycomb repressive complex 2 (PRC2), which mediates histone H3K27 (H3K27me3) trimethylation on chromatin leading to transcriptional repression of the affected target gene. Plays a role in nucleosome localization of the PRC2 complex. The polypeptide is Zinc finger protein AEBP2 (Aebp2) (Mus musculus (Mouse)).